A 356-amino-acid chain; its full sequence is Beta-hexosaminidase (356 aa).

Residues aspartate 75, arginine 83, arginine 150, and 180 to 181 (KH) contribute to the substrate site. The active-site Proton donor/acceptor is histidine 193. The active-site Nucleophile is the aspartate 264.

The protein belongs to the glycosyl hydrolase 3 family. NagZ subfamily.

The protein localises to the cytoplasm. It catalyses the reaction Hydrolysis of terminal non-reducing N-acetyl-D-hexosamine residues in N-acetyl-beta-D-hexosaminides.. Its pathway is cell wall biogenesis; peptidoglycan recycling. Its function is as follows. Plays a role in peptidoglycan recycling by cleaving the terminal beta-1,4-linked N-acetylglucosamine (GlcNAc) from peptide-linked peptidoglycan fragments, giving rise to free GlcNAc, anhydro-N-acetylmuramic acid and anhydro-N-acetylmuramic acid-linked peptides. In Aromatoleum aromaticum (strain DSM 19018 / LMG 30748 / EbN1) (Azoarcus sp. (strain EbN1)), this protein is Beta-hexosaminidase.